The following is a 706-amino-acid chain: Fatty acid oxidation complex subunit alpha (706 aa).

Residues 1–188 form an enoyl-CoA hydratase region; it reads MEKTFSLSRR…KMGLVDDVVP (188 aa). The 3-hydroxyacyl-CoA dehydrogenase stretch occupies residues 308–706; that stretch reads RKVAKAVVLG…AMAAEGKTFY (399 aa).

In the N-terminal section; belongs to the enoyl-CoA hydratase/isomerase family. This sequence in the central section; belongs to the 3-hydroxyacyl-CoA dehydrogenase family. As to quaternary structure, heterotetramer of two alpha chains (FadJ) and two beta chains (FadI).

It is found in the cytoplasm. It catalyses the reaction a (3S)-3-hydroxyacyl-CoA = a (2E)-enoyl-CoA + H2O. The enzyme catalyses a 4-saturated-(3S)-3-hydroxyacyl-CoA = a (3E)-enoyl-CoA + H2O. It carries out the reaction a (3S)-3-hydroxyacyl-CoA + NAD(+) = a 3-oxoacyl-CoA + NADH + H(+). The catalysed reaction is (3S)-3-hydroxybutanoyl-CoA = (3R)-3-hydroxybutanoyl-CoA. The protein operates within lipid metabolism; fatty acid beta-oxidation. Catalyzes the formation of a hydroxyacyl-CoA by addition of water on enoyl-CoA. Also exhibits 3-hydroxyacyl-CoA epimerase and 3-hydroxyacyl-CoA dehydrogenase activities. In Shewanella amazonensis (strain ATCC BAA-1098 / SB2B), this protein is Fatty acid oxidation complex subunit alpha.